The chain runs to 281 residues: Dexamethasone-induced Ras-related protein 1 (281 aa).

Cys11 carries the post-translational modification S-nitrosocysteine. 31-38 (GSSKVGKT) lines the GTP pocket. The short motif at 53-61 (YTPTIEDFH) is the Effector region element. Residues 78 to 82 (DTSGN) and 145 to 148 (NKGD) each bind GTP. Residue Cys278 is modified to Cysteine methyl ester. A lipid anchor (S-farnesyl cysteine) is attached at Cys278. A propeptide spans 279–281 (VIS) (removed in mature form).

This sequence belongs to the small GTPase superfamily. RasD family. In terms of assembly, forms a ternary complex with CAPON and NOS1. Component of a complex, at least composed of APBB1, RASD1/DEXRAS1 and APP. Interacts with APBB1/FE65. In terms of processing, S-nitrosylation stimulates guanine-nucleotide exchange activity. As to expression, expressed in a variety of tissues including heart, cardiovascular tissues, brain, placenta, lung, liver, skeletal muscle, kidney, pancreas, gastrointestinal and reproductive tissues.

The protein localises to the cell membrane. It is found in the cytoplasm. It localises to the perinuclear region. The protein resides in the nucleus. Functionally, small GTPase. Negatively regulates the transcription regulation activity of the APBB1/FE65-APP complex via its interaction with APBB1/FE65. The protein is Dexamethasone-induced Ras-related protein 1 (RASD1) of Homo sapiens (Human).